Here is a 622-residue protein sequence, read N- to C-terminus: 1-deoxy-D-xylulose-5-phosphate synthase (622 aa).

Thiamine diphosphate-binding positions include histidine 74 and 115–117 (GHS). Aspartate 146 serves as a coordination point for Mg(2+). Thiamine diphosphate-binding positions include 147 to 148 (GA), asparagine 177, phenylalanine 285, and glutamate 366. Asparagine 177 contributes to the Mg(2+) binding site.

It belongs to the transketolase family. DXPS subfamily. As to quaternary structure, homodimer. It depends on Mg(2+) as a cofactor. Thiamine diphosphate is required as a cofactor.

The enzyme catalyses D-glyceraldehyde 3-phosphate + pyruvate + H(+) = 1-deoxy-D-xylulose 5-phosphate + CO2. It participates in metabolic intermediate biosynthesis; 1-deoxy-D-xylulose 5-phosphate biosynthesis; 1-deoxy-D-xylulose 5-phosphate from D-glyceraldehyde 3-phosphate and pyruvate: step 1/1. In terms of biological role, catalyzes the acyloin condensation reaction between C atoms 2 and 3 of pyruvate and glyceraldehyde 3-phosphate to yield 1-deoxy-D-xylulose-5-phosphate (DXP). The polypeptide is 1-deoxy-D-xylulose-5-phosphate synthase (Magnetococcus marinus (strain ATCC BAA-1437 / JCM 17883 / MC-1)).